The primary structure comprises 361 residues: DNA polymerase subunit gamma-2, mitochondrial (361 aa).

The N-terminal 18 residues, 1 to 18, are a transit peptide targeting the mitochondrion; it reads MSRIQRCFKSLASAGFFR.

Component of the DNA polymerase gamma complex consisting of two subunits: the catalytic subunit DNApol-gamma/DNApolG1 and the accessory subunit PolG2/DNApol-gamma35. Expressed in ovaries (at protein level).

The protein resides in the mitochondrion. Functionally, as accessory component of the DNA polymerase gamma complex is involved in the replication of mitochondrial DNA. Does not bind DNA. Essential for mitochondrial DNA maintenance and larval development. The protein is DNA polymerase subunit gamma-2, mitochondrial of Drosophila melanogaster (Fruit fly).